Here is a 310-residue protein sequence, read N- to C-terminus: Transcription initiation factor IIB (310 aa).

The TFIIB-type zinc finger occupies 9–41 (EKETKCPECGSDDLRGDYERAEIVCGKCGLVID). Zn(2+) contacts are provided by Cys-14, Cys-17, Cys-33, and Cys-36. 2 consecutive repeat copies span residues 127–210 (SELD…TREL) and 221–302 (DYVP…ELTE).

Belongs to the TFIIB family.

Functionally, stabilizes TBP binding to an archaeal box-A promoter. Also responsible for recruiting RNA polymerase II to the pre-initiation complex (DNA-TBP-TFIIB). In Methanothermobacter thermautotrophicus (strain ATCC 29096 / DSM 1053 / JCM 10044 / NBRC 100330 / Delta H) (Methanobacterium thermoautotrophicum), this protein is Transcription initiation factor IIB.